Consider the following 477-residue polypeptide: Prolyl tri/tetrapeptidyl aminopeptidase (477 aa).

A signal peptide spans 1–27 (MRKALRSLLAASMLIGAIGAGSATAEA). A propeptide spanning residues 28 to 33 (ASITAP) is cleaved from the precursor. The disordered stretch occupies residues 448-477 (QKDEKAAKPLAPFDAKLDRVKNDKQSALRP). The segment covering 462–477 (AKLDRVKNDKQSALRP) has biased composition (basic and acidic residues).

It belongs to the peptidase S37 family.

Its subcellular location is the secreted. The protein localises to the cell surface. Its activity is regulated as follows. Completely inhibited by the serine protease inhibitor phenylmethylsulfonyl fluoride. Partially inhibited by the serine protease inhibitor Pefabloc. Not inhibited by cysteine proteinase-specific or metalloproteinase-specific inhibitors. Not inhibited by prolinal or its derivatives. EDTA and EGTA both partially inhibit this enzyme. EDTA has no effect on activity. Has proline-specific tripeptidyl aminopeptidase and tetrapeptidyl aminopeptidase activity. Activity is highest against tripeptides containing an Ala-Pro motif. Involved in the final processing of transglutaminase, by removing either the tetrapeptide Phe-Arg-Ala-Pro left after TAMEP or SAM-P45 hydrolysis, or the tripeptide Arg-Ala-Pro left after SGMP II hydrolysis in a single step. The chain is Prolyl tri/tetrapeptidyl aminopeptidase (ptp) from Streptomyces mobaraensis (Streptoverticillium mobaraense).